A 400-amino-acid polypeptide reads, in one-letter code: Probable succinyl-diaminopimelate desuccinylase (400 aa).

His-72 is a binding site for Zn(2+). The active site involves Asp-74. Asp-105 contacts Zn(2+). The active-site Proton acceptor is Glu-139. Zn(2+) contacts are provided by Glu-140, Glu-165, and His-378.

It belongs to the peptidase M20A family. Requires Zn(2+) as cofactor. The cofactor is Co(2+).

It catalyses the reaction N-succinyl-(2S,6S)-2,6-diaminopimelate + H2O = (2S,6S)-2,6-diaminopimelate + succinate. It participates in amino-acid biosynthesis; L-lysine biosynthesis via DAP pathway; LL-2,6-diaminopimelate from (S)-tetrahydrodipicolinate (succinylase route): step 3/3. The sequence is that of Probable succinyl-diaminopimelate desuccinylase (dapE) from Staphylococcus aureus (strain Mu50 / ATCC 700699).